The following is a 185-amino-acid chain: MIKDIIKNAEEKMQKTVTVLKSELGTMKAGRANPSMLDKIQIDYYGSMCPLSQAANISSPEPRVLMITPWEKQLLKEIEKAILKSDLGLNPSNDGSIIRLVIPELTEETRKDLVKKVKKTGEESKVAIRSIRRDANDKIKALKKDGDLSEDQVKKGEDDVQKKTDAIIKEIDKIIVDKEKEILAI.

Belongs to the RRF family.

It is found in the cytoplasm. Responsible for the release of ribosomes from messenger RNA at the termination of protein biosynthesis. May increase the efficiency of translation by recycling ribosomes from one round of translation to another. This chain is Ribosome-recycling factor, found in Clostridium botulinum (strain Alaska E43 / Type E3).